A 400-amino-acid chain; its full sequence is Flavo-diiron protein FprA2 (400 aa).

The tract at residues 32–216 is zinc metallo-hydrolase; the sequence is GTSYNAYLIK…VVKGLDILDA (185 aa). Fe cation contacts are provided by His79, Glu81, Asp83, His147, Asp166, and His226. The region spanning 257 to 397 is the Flavodoxin-like domain; sequence IPIFYCSAYG…KAFKFGEDFA (141 aa). Residues 263-267 and 345-372 contribute to the FMN site; these read SAYGN and AFGSFGWSGEAIPFVISRLKELKLKVFQ.

This sequence in the N-terminal section; belongs to the zinc metallo-hydrolase group 3 family. Homotetramer. FMN serves as cofactor. Fe cation is required as a cofactor.

It catalyses the reaction 2 NADH + O2 + 2 H(+) = 2 NAD(+) + 2 H2O. In terms of biological role, catalyzes the four-electron reduction of molecular oxygen to water. In fact, functions as the terminal component of an NADH oxidase (NADH:O(2) oxidoreductase) when using NADH:rubredoxin oxidoreductase (NROR) and rubredoxin (Rd) as electron transport intermediaries between NADH and FDP. Is thus able to reductively scavenge intracellular dioxygen and is part of an oxidative stress defense system in C.acetobutylicum, an obligate anaerobic bacterium. Can also serve as the terminal component of an NADH:nitric oxide oxidoreductase (NOR) with a catalytic efficiency comparable to that of its NADH oxidase activity, and therefore might have an in vivo role in scavenging nitric oxide. This is Flavo-diiron protein FprA2 (fprA2) from Clostridium acetobutylicum (strain ATCC 824 / DSM 792 / JCM 1419 / IAM 19013 / LMG 5710 / NBRC 13948 / NRRL B-527 / VKM B-1787 / 2291 / W).